Consider the following 245-residue polypeptide: Ribonuclease P protein component 3 (245 aa).

It belongs to the eukaryotic/archaeal RNase P protein component 3 family. In terms of assembly, consists of a catalytic RNA component and at least 4-5 protein subunits.

It localises to the cytoplasm. It carries out the reaction Endonucleolytic cleavage of RNA, removing 5'-extranucleotides from tRNA precursor.. In terms of biological role, part of ribonuclease P, a protein complex that generates mature tRNA molecules by cleaving their 5'-ends. This Methanothermobacter thermautotrophicus (strain ATCC 29096 / DSM 1053 / JCM 10044 / NBRC 100330 / Delta H) (Methanobacterium thermoautotrophicum) protein is Ribonuclease P protein component 3.